The primary structure comprises 29 residues: Cyclotide vibi-A (29 aa).

Residues 1 to 29 constitute a cross-link (cyclopeptide (Gly-Asn)); sequence GLPVCGETCFGGTCNTPGCSCSYPICTRN. 3 cysteine pairs are disulfide-bonded: C5–C19, C9–C21, and C14–C26.

Post-translationally, this is a cyclic peptide.

Its function is as follows. Probably participates in a plant defense mechanism. The chain is Cyclotide vibi-A from Viola biflora (Yellow wood violet).